A 1170-amino-acid polypeptide reads, in one-letter code: Thrombospondin-1 (1170 aa).

The signal sequence occupies residues 1 to 18; it reads MGLAWGLGVLFLMHVCGT. Positions 47 to 95 are heparin-binding; that stretch reads RLVKGPDPSSPAFRIEDANLIPPVPDDKFQDLVDAVRAEKGFLLLASLR. Positions 65-270 constitute a Laminin G-like domain; sequence NLIPPVPDDK…HKTKDLQAIC (206 aa). A disulfide bridge connects residues C171 and C232. N-linked (GlcNAc...) asparagine glycosylation is found at N248 and N360. The VWFC domain occupies 316–373; the sequence is PLCYHNGVQYRNNEEWTVDSCTECHCQNSVTICKKVSCPIMPCSNATVPDGECCPRCW. TSP type-1 domains follow at residues 379–429, 435–490, and 492–547; these read DDGW…QECD, DGGW…DACP, and NGGW…QDCP. A glycan (C-linked (Man) tryptophan) is linked at W385. 3 cysteine pairs are disulfide-bonded: C391–C423, C395–C428, and C406–C413. The O-linked (Fuc...) serine glycan is linked to S394. C-linked (Man) tryptophan glycosylation is found at W438 and W441. 3 disulfide bridges follow: C447/C484, C451/C489, and C462/C474. O-linked (Fuc...) threonine glycosylation is present at T450. C-linked (Man) tryptophan glycosylation is present at W498. Intrachain disulfides connect C504-C541, C508-C546, C519-C531, C551-C562, C556-C572, C575-C586, C592-C608, C599-C617, C620-C644, C650-C663, C657-C676, C678-C689, C705-C713, C718-C738, C754-C774, C777-C797, C813-C833, C836-C856, C874-C894, C910-C930, and C946-C1167. The O-linked (Fuc...) threonine glycan is linked to T507. The segment at 531–1152 is involved in retention in extracellular matrix (ECM); involved in trimer formation; it reads CVGDVTENQI…YAGGRLGLFV (622 aa). The EGF-like 1 domain occupies 547–587; the sequence is PIDGCLSNPCFAGVKCTSYPDGSWKCGACPPGYSGNGIQCT. A glycan (O-linked (Xyl) serine) is linked at S553. An EGF-like 2 domain is found at 646-690; that stretch reads PRNPCTDGTHDCNKNAKCNYLGHYSDPMYRCECKPGYAGNGIICG. TSP type-3 repeat units lie at residues 691–726, 727–762, 763–785, 786–821, 822–844, 845–882, 883–918, and 919–954; these read EDTDLDGWPNENLVCVANATYHCKKDNCPNLPNSGQ, EDYDKDGIGDACDDDDDNDKIPDDRDNCPFHYNPAQ, YDYDRDDVGDRCDNCPYNHNPDQ, ADTDNNGEGDACAADIDGDGILNERDNCQYVYNVDQ, RDTDMDGVGDQCDNCPLEHNPDQ, LDSDSDRIGDTCDNNQDIDEDGHQNNLDNCPYVPNANQ, ADHDKDGKGDACDHDDDNDGIPDDKDNCRLVPNPDQ, and KDSDGDGRGDACKDDFDHDSVPDIDDICPENVDISE. An N-linked (GlcNAc...) asparagine glycan is attached at N708. Residues 839-934 are disordered; the sequence is EHNPDQLDSD…GRGDACKDDF (96 aa). Composition is skewed to basic and acidic residues over residues 840–854, 883–894, and 917–934; these read HNPDQLDSDSDRIGD, ADHDKDGKGDAC, and DQKDSDGDGRGDACKDDF. The Cell attachment site signature appears at 926 to 928; that stretch reads RGD. Residues 958–1170 enclose the TSP C-terminal domain; the sequence is RRFQMIPLDP…SDLKYECRDP (213 aa). N-linked (GlcNAc...) asparagine glycosylation occurs at N1067.

It belongs to the thrombospondin family. Homotrimer; disulfide-linked. Can bind to fibrinogen, fibronectin, laminin, type V collagen and integrins alpha-V/beta-1, alpha-V/beta-3 and alpha-IIb/beta-3. Binds heparin. Interacts (via the C-terminal domain) with CD47. Interacts (via the TSP type I repeats) with CD36; the interaction conveys an antiangiogenic effect. Interacts (via the TSP type I repeats) with HRG; the interaction blocks the antiangiogenic effect of THBS1 with CD36. Interacts with ATF6 (via lumenal domain). Interacts with FN1; this interaction is enhanced by TNFAIP6, which may act as a bridging molecule between FN1 and THBS1. Interacts with SIRPA; the interaction stimulates phosphorylation of SIRPA. In terms of tissue distribution, expressed by platelets (at protein level). Expressed by monocyte-derived immature and mature dendritic cells (at protein level).

It localises to the secreted. The protein resides in the cell surface. Its subcellular location is the extracellular space. It is found in the extracellular matrix. The protein localises to the endoplasmic reticulum. It localises to the sarcoplasmic reticulum. Its function is as follows. Adhesive glycoprotein that mediates cell-to-cell and cell-to-matrix interactions. Multifunctional, involved in inflammation, angiogenesis, wound healing, reactive oxygen species (ROS) signaling, nitrous oxide (NO) signaling, apoptosis, senescence, aging, cellular self-renewal, stemness, and cardiovascular and metabolic homeostasis. Negatively modulates dendritic cell activation and cytokine release, as part of an autocrine feedback loop, contributing to the resolution of inflammation and immune homeostasis. Ligand for receptor CD47. Modulates nitrous oxide (NO) signaling via CD47, hence playing a role as a pressor agent, supporting blood pressure. Plays a role in endothelial cell senescence, acting via CD47, by increasing the abundance and activation of NADPH oxidase NOX1, and so generating excess ROS. Inhibits stem cell self-renewal, acting via CD47 signaling, probably by regulation of the stem cell transcription factors POU5F1/OCT4, SOX2, MYC/c-Myc and KLF4. Negatively modulates wound healing, acting via CD47. Ligand for receptor CD36. Involved in inducing apoptosis in podocytes in response to elevated free fatty acids, acting via CD36. Plays a role in suppressing angiogenesis, acting, depending on context, via CD36 or CD47. Promotes cellular senescence in a TP53-CDKN1A-RB1 signaling-dependent manner. Ligand for immunoglobulin-like cell surface receptor SIRPA. Involved in ROS signaling in non-phagocytic cells, stimulating NADPH oxidase-derived ROS production, acting via interaction with SIRPA. Plays a role in metabolic dysfunction in diet-induced obesity, perhaps acting by exacerbating adipose inflammatory activity; its effects may be mediated, at least in part, through enhanced adipocyte proliferation. Plays a role in ER stress response, via its interaction with the activating transcription factor 6 alpha (ATF6) which produces adaptive ER stress response factors. May be involved in age-related conditions, including metabolic dysregulation, during normal aging. The polypeptide is Thrombospondin-1 (Homo sapiens (Human)).